Here is a 128-residue protein sequence, read N- to C-terminus: Sulfurtransferase TusD (128 aa).

Residue Cys-78 is the Cysteine persulfide intermediate of the active site.

The protein belongs to the DsrE/TusD family. Heterohexamer, formed by a dimer of trimers. The hexameric TusBCD complex contains 2 copies each of TusB, TusC and TusD. The TusBCD complex interacts with TusE.

The protein localises to the cytoplasm. In terms of biological role, part of a sulfur-relay system required for 2-thiolation of 5-methylaminomethyl-2-thiouridine (mnm(5)s(2)U) at tRNA wobble positions. Accepts sulfur from TusA and transfers it in turn to TusE. This is Sulfurtransferase TusD from Salmonella typhi.